Reading from the N-terminus, the 57-residue chain is Exactin (57 aa).

4 cysteine pairs are disulfide-bonded: Cys-3/Cys-19, Cys-12/Cys-37, Cys-41/Cys-49, and Cys-50/Cys-55.

It belongs to the three-finger toxin family. Short-chain subfamily. Orphan group XX sub-subfamily. Expressed by the venom gland.

The protein resides in the secreted. Anticoagulant protein that prevents the activation of factor X (F10). It acts by potently inhibiting the extrinsic tenase complex (ETC) (IC(50)=116.49 nM), a complex composed by active factor VII (F7a), tissue factor (TF) and F10. In addition, it shows weaker activities on other complexes. It weakly inhibits F10 activation by inhibiting the intrinsic tenase complex (IC(50)=4.05 uM), a complex composed by active factor IX (IXa, F9a), its cofactor factor VIII (VIIIa, F8a), and their substrate F10. It also weakly prevents prothrombin activation by inhibiting the prothrombinase complex (IC(50)=17.66 uM). It shows high kinetic constant towards F7a/TF/F10/phospholipids complex (Ki=30.62 nM) and lower kinetic constant towards F7a/TF/phospholipids complex (Ki=153.75 nM). This is Exactin from Hemachatus haemachatus (Rinkhals).